Consider the following 573-residue polypeptide: Splicing factor U2af large subunit B (573 aa).

Over residues 1-12 the composition is skewed to acidic residues; it reads MPDYEGNGEDID. The interval 1 to 187 is disordered; it reads MPDYEGNGED…DMAPPTSAML (187 aa). Over residues 38–145 the composition is skewed to basic and acidic residues; it reads SDSKSQHSSR…QREHAKDRES (108 aa). The span at 161-173 shows a compositional bias: basic residues; that stretch reads SRSRSRSRSKSKR. RRM domains lie at 239 to 322, 359 to 437, and 478 to 564; these read RRVY…RPSD, DRIF…RANQ, and EVIS…YPEN.

The protein belongs to the splicing factor SR family. In terms of tissue distribution, expressed in stems, leaves and apical buds.

It is found in the nucleus. In terms of biological role, necessary for the splicing of pre-mRNA. Binds to the U -enriched regions of plant introns. In Nicotiana plumbaginifolia (Leadwort-leaved tobacco), this protein is Splicing factor U2af large subunit B (U2AF65B).